The primary structure comprises 89 residues: Large ribosomal subunit protein bL28 (89 aa).

Belongs to the bacterial ribosomal protein bL28 family.

The protein is Large ribosomal subunit protein bL28 of Chlamydia abortus (strain DSM 27085 / S26/3) (Chlamydophila abortus).